The following is a 269-amino-acid chain: Eukaryotic translation initiation factor 3 subunit G-1 (269 aa).

In terms of domain architecture, RRM spans A188–P266.

Belongs to the eIF-3 subunit G family. As to quaternary structure, component of the eukaryotic translation initiation factor 3 (eIF-3) complex. The eIF-3 complex interacts with pix.

It is found in the cytoplasm. RNA-binding component of the eukaryotic translation initiation factor 3 (eIF-3) complex, which is involved in protein synthesis of a specialized repertoire of mRNAs and, together with other initiation factors, stimulates binding of mRNA and methionyl-tRNAi to the 40S ribosome. The eIF-3 complex specifically targets and initiates translation of a subset of mRNAs involved in cell proliferation. This subunit can bind 18S rRNA. The polypeptide is Eukaryotic translation initiation factor 3 subunit G-1 (Drosophila grimshawi (Hawaiian fruit fly)).